A 155-amino-acid chain; its full sequence is Small ribosomal subunit protein uS7 (155 aa).

The protein belongs to the universal ribosomal protein uS7 family. Part of the 30S ribosomal subunit. Contacts proteins S9 and S11.

Its function is as follows. One of the primary rRNA binding proteins, it binds directly to 16S rRNA where it nucleates assembly of the head domain of the 30S subunit. Is located at the subunit interface close to the decoding center, probably blocks exit of the E-site tRNA. In Mycoplasma genitalium (strain ATCC 33530 / DSM 19775 / NCTC 10195 / G37) (Mycoplasmoides genitalium), this protein is Small ribosomal subunit protein uS7.